The chain runs to 84 residues: Large ribosomal subunit protein bL27 (84 aa).

Residues 1-21 (MAHKKGGGSTKNGRDSNPKYL) form a disordered region.

Belongs to the bacterial ribosomal protein bL27 family.

The chain is Large ribosomal subunit protein bL27 from Chlorobium limicola (strain DSM 245 / NBRC 103803 / 6330).